The chain runs to 150 residues: UPF0178 protein AHA_0543 (150 aa).

This sequence belongs to the UPF0178 family.

The sequence is that of UPF0178 protein AHA_0543 from Aeromonas hydrophila subsp. hydrophila (strain ATCC 7966 / DSM 30187 / BCRC 13018 / CCUG 14551 / JCM 1027 / KCTC 2358 / NCIMB 9240 / NCTC 8049).